The following is a 769-amino-acid chain: Apoptotic enhancer 1 protein (769 aa).

Disordered stretches follow at residues 69–88 (PVRV…SQQY), 265–396 (SVEP…LDES), and 451–518 (PQLP…RSDD). Low complexity predominate over residues 275-284 (QQQQPSPQMM). Positions 285 to 295 (KSEEFSEKRDL) are enriched in basic and acidic residues. Residues 339–353 (STDPHSNHSSPSTSS) show a composition bias toward low complexity. 3 stretches are compositionally biased toward polar residues: residues 354–378 (QKAP…TMTR), 453–467 (LPTS…TSET), and 474–491 (NSES…NNLE). 2 ANK repeats span residues 585–617 (EGIT…AQDS) and 618–652 (DGWT…TLSD). The region spanning 684-746 (INTGKVYAAY…PRTYLALYPS (63 aa)) is the SH3 domain.

Belongs to the iASPP family. As to quaternary structure, interacts with cep-1/p53; the interaction inhibits pro-apoptotic activity of cep-1.

The protein resides in the nucleus. In terms of biological role, negetively regulates apoptosis via its interaction with cep-1. The protein is Apoptotic enhancer 1 protein of Caenorhabditis elegans.